Here is a 414-residue protein sequence, read N- to C-terminus: Glucose-1-phosphate adenylyltransferase (414 aa).

Alpha-D-glucose 1-phosphate-binding positions include Y99, G164, 181-182 (EK), and S199.

This sequence belongs to the bacterial/plant glucose-1-phosphate adenylyltransferase family. As to quaternary structure, homotetramer.

The enzyme catalyses alpha-D-glucose 1-phosphate + ATP + H(+) = ADP-alpha-D-glucose + diphosphate. It functions in the pathway glycan biosynthesis; glycogen biosynthesis. Its function is as follows. Involved in the biosynthesis of ADP-glucose, a building block required for the elongation reactions to produce glycogen. Catalyzes the reaction between ATP and alpha-D-glucose 1-phosphate (G1P) to produce pyrophosphate and ADP-Glc. This is Glucose-1-phosphate adenylyltransferase from Bifidobacterium adolescentis (strain ATCC 15703 / DSM 20083 / NCTC 11814 / E194a).